Reading from the N-terminus, the 81-residue chain is A-kinase anchor protein 7 isoform alpha (81 aa).

Residue G2 is the site of N-myristoyl glycine attachment. A required for membrane localization region spans residues 2–11 (GQLCCFPFAR). S-palmitoyl cysteine attachment occurs at residues C5 and C6. Positions 29-42 (LVRLSKRLVENAVL) are RII-binding. The segment at 49 to 81 (LEETQNKKQPGEGNSTKAEEGDRNGDGSDNNRK) is disordered. The span at 65 to 81 (KAEEGDRNGDGSDNNRK) shows a compositional bias: basic and acidic residues.

As to quaternary structure, binds cAMP-dependent protein kinase (PKA). Interacts with PRKCA; only the cytoplasmic form is capable of interacting with PRKCA.

It localises to the lateral cell membrane. Targets the cAMP-dependent protein kinase (PKA) to the plasma membrane, and permits functional coupling to the L-type calcium channel. The membrane-associated form reduces epithelial sodium channel (ENaC) activity, whereas the free cytoplasmic form may negatively regulate ENaC channel feedback inhibition by intracellular sodium. This Mus musculus (Mouse) protein is A-kinase anchor protein 7 isoform alpha (Akap7).